A 324-amino-acid chain; its full sequence is Probable pectinesterase A (324 aa).

The first 19 residues, 1-19, serve as a signal peptide directing secretion; it reads MHLPSLVLGLLGLGLTASA. N-linked (GlcNAc...) asparagine glycosylation is present at N27. Residue Q142 participates in substrate binding. Residue D165 is the Proton donor of the active site. The active-site Nucleophile is the D186. N191 is a glycosylation site (N-linked (GlcNAc...) asparagine). Substrate is bound by residues R246 and W248.

This sequence belongs to the pectinesterase family.

Its subcellular location is the secreted. It catalyses the reaction [(1-&gt;4)-alpha-D-galacturonosyl methyl ester](n) + n H2O = [(1-&gt;4)-alpha-D-galacturonosyl](n) + n methanol + n H(+). The protein operates within glycan metabolism; pectin degradation; 2-dehydro-3-deoxy-D-gluconate from pectin: step 1/5. Its function is as follows. Involved in maceration and soft-rotting of plant tissue. The sequence is that of Probable pectinesterase A (pmeA) from Neosartorya fischeri (strain ATCC 1020 / DSM 3700 / CBS 544.65 / FGSC A1164 / JCM 1740 / NRRL 181 / WB 181) (Aspergillus fischerianus).